Consider the following 521-residue polypeptide: Anaerobic nitric oxide reductase flavorubredoxin (521 aa).

The zinc metallo-hydrolase stretch occupies residues His30–Ile210. Fe cation contacts are provided by His79, Glu81, Asp83, His147, Asp166, and His227. The Flavodoxin-like domain occupies Ile254–Ala393. FMN is bound by residues Ser260–Asn264 and Ala342–Ile369. The region spanning Asp464–Cys515 is the Rubredoxin-like domain. The Fe cation site is built by Cys469, Cys472, Cys502, and Cys505.

This sequence in the N-terminal section; belongs to the zinc metallo-hydrolase group 3 family. As to quaternary structure, homotetramer. The cofactor is Fe cation. FMN serves as cofactor.

It localises to the cytoplasm. It functions in the pathway nitrogen metabolism; nitric oxide reduction. Anaerobic nitric oxide reductase; uses NADH to detoxify nitric oxide (NO), protecting several 4Fe-4S NO-sensitive enzymes. Has at least 2 reductase partners, only one of which (NorW, flavorubredoxin reductase) has been identified. NO probably binds to the di-iron center; electrons enter from the NorW at rubredoxin and are transferred sequentially to the FMN center and the di-iron center. Also able to function as an aerobic oxygen reductase. The protein is Anaerobic nitric oxide reductase flavorubredoxin of Aeromonas salmonicida (strain A449).